Reading from the N-terminus, the 456-residue chain is GTPase Der (456 aa).

2 consecutive EngA-type G domains span residues 2 to 167 (LKVA…DQFG) and 176 to 351 (ATFC…AQLK). GTP is bound by residues 8-15 (GKPNVGKS), 55-59 (DTGGL), 118-121 (NKIE), 182-189 (GKPNVGKS), 229-233 (DTAGI), and 294-297 (NKWD). Positions 352 to 436 (IKISTSLLND…PITLYFKSKN (85 aa)) constitute a KH-like domain.

This sequence belongs to the TRAFAC class TrmE-Era-EngA-EngB-Septin-like GTPase superfamily. EngA (Der) GTPase family. In terms of assembly, associates with the 50S ribosomal subunit.

Functionally, GTPase that plays an essential role in the late steps of ribosome biogenesis. This chain is GTPase Der, found in Mycoplasmoides gallisepticum (strain R(low / passage 15 / clone 2)) (Mycoplasma gallisepticum).